A 611-amino-acid polypeptide reads, in one-letter code: Pseudomonine synthase PmsE (611 aa).

A Carrier domain is found at 533–608; it reads VSVENTRTWL…SWWALVEARQ (76 aa). The residue at position 569 (Ser-569) is an O-(pantetheine 4'-phosphoryl)serine.

Belongs to the ATP-dependent AMP-binding enzyme family. Pantetheine 4'-phosphate serves as cofactor.

The enzyme catalyses salicylate + holo-[ACP] + ATP = salicyl-[ACP] + AMP + diphosphate. It functions in the pathway siderophore biosynthesis; pseudomonine biosynthesis. In terms of biological role, involved in the biosynthesis of the siderophore pseudomonine. Specifically adenylates salicylate and loads it onto its peptidyl carrier domain, via a thioester linkage to the phosphopanthetheine moiety. The chain is Pseudomonine synthase PmsE from Pseudomonas entomophila (strain L48).